A 184-amino-acid chain; its full sequence is Ribosome-recycling factor (184 aa).

This sequence belongs to the RRF family.

The protein localises to the cytoplasm. Functionally, responsible for the release of ribosomes from messenger RNA at the termination of protein biosynthesis. May increase the efficiency of translation by recycling ribosomes from one round of translation to another. In Cutibacterium acnes (strain DSM 16379 / KPA171202) (Propionibacterium acnes), this protein is Ribosome-recycling factor.